The following is a 61-amino-acid chain: 14-3-3-like protein (61 aa).

This sequence belongs to the 14-3-3 family.

This is 14-3-3-like protein from Zea mays (Maize).